A 237-amino-acid chain; its full sequence is Sugar fermentation stimulation protein homolog (237 aa).

The protein belongs to the SfsA family.

This is Sugar fermentation stimulation protein homolog from Actinobacillus pleuropneumoniae serotype 3 (strain JL03).